The following is a 414-amino-acid chain: MVLGKVKSLTISFDCLNDSNVPVYSSGDTVSGRVNLEVTGEIRVKSLKIHARGHAKVRWTESRNAGSNTAYTQNYTEEVEYFNHKDILIGHERDDDNSEEGFHTIHSGRHEYAFSFELPQTPLATSFEGRHGSVRYWVKAELHRPWLLPVKLKKEFTVFEHIDINTPSLLSPQAGTKEKTLCCWFCTSGPISLSAKIERKGYTPGESIQIFAEIENCSSRMVVPKAAIYQTQAFYAKGKMKEVKQLVANLRGESLSSGKTETWNGKLLKIPPVSPSILDCSIIRVEYSLMVYVDIPGAMDLFLNLPLVIGTIPLHPFGSRTSSVSSQCSMNMNWLSLSLPERPEAPPSYAEVVTEEQRRNNLAPVSACDDFERALQGPLFAYIQEFRFLPPPLYSEIDPNPDQSADDRPSCPSR.

Short sequence motifs (PPxY motif) lie at residues 346-349 and 391-394; these read PPSY and PPLY. The interval 393–414 is disordered; it reads LYSEIDPNPDQSADDRPSCPSR. Over residues 405–414 the composition is skewed to basic and acidic residues; the sequence is ADDRPSCPSR.

Belongs to the arrestin family. Interacts (via PPxY motifs) with NEDD4 (via WW domains). Interacts with ADRB2. Interacts with ADRB3. Interacts with HGS (via PPxY motifs). Does not bind TXN (thioredoxin). Interacts with ITCH. Interacts with WWP1 (via WW domains). Highly expressed in skeletal muscle, placenta, kidney, lung, liver, blood, adrenal gland, lymph node, mammary gland, thyroid, and trachea. Very low levels in colon, thymus, spleen, small intestine, bladder and bone marrow. Strong expression in differentiated adipocytes compared to preadipocytes. Detected in omental fat and subcutaneous fat tissue.

It is found in the cytoplasm. Its subcellular location is the cell membrane. The protein resides in the lysosome. It localises to the endosome. The protein localises to the early endosome. Its function is as follows. Adapter protein that plays a role in regulating cell-surface expression of adrenergic receptors and probably also other G protein-coupled receptors. Plays a role in NEDD4-mediated ubiquitination and endocytosis af activated ADRB2 and subsequent ADRB2 degradation. May recruit NEDD4 to ADRB2. Alternatively, may function as adapter protein that does not play a major role in recruiting NEDD4 to ADRB2, but rather plays a role in a targeting ADRB2 to endosomes. This is Arrestin domain-containing protein 3 (ARRDC3) from Homo sapiens (Human).